Reading from the N-terminus, the 341-residue chain is Protein CbhE (341 aa).

Positions 287–297 are enriched in acidic residues; that stretch reads IDEENTSDSSE. Residues 287–341 are disordered; the sequence is IDEENTSDSSEEGTSKNRFRDTLFSNVPDSSSDSENEQEREKKELAGKTPSFRLC. Residues 323 to 332 show a composition bias toward basic and acidic residues; sequence EQEREKKELA.

It localises to the cytoplasm. May be involved in the pathogenesis of acute Q fever. The polypeptide is Protein CbhE (cbhE) (Coxiella burnetii (strain RSA 493 / Nine Mile phase I)).